A 248-amino-acid polypeptide reads, in one-letter code: PACRG-like protein (248 aa).

An N-acetylmethionine modification is found at Met-1. Polar residues predominate over residues 1–29 (MQKSEGSGGTQLKNRATGNYDQRTSSSTQ). Residues 1-71 (MQKSEGSGGT…LNPKTINPFG (71 aa)) form a disordered region. Over residues 39-49 (SKSSLSTSSPE) the composition is skewed to low complexity. Ser-47 bears the Phosphoserine mark.

In Homo sapiens (Human), this protein is PACRG-like protein (PACRGL).